A 378-amino-acid chain; its full sequence is Anhydro-N-acetylmuramic acid kinase (378 aa).

9 to 16 contacts ATP; that stretch reads GTSADGID.

This sequence belongs to the anhydro-N-acetylmuramic acid kinase family.

The enzyme catalyses 1,6-anhydro-N-acetyl-beta-muramate + ATP + H2O = N-acetyl-D-muramate 6-phosphate + ADP + H(+). The protein operates within amino-sugar metabolism; 1,6-anhydro-N-acetylmuramate degradation. Its pathway is cell wall biogenesis; peptidoglycan recycling. Catalyzes the specific phosphorylation of 1,6-anhydro-N-acetylmuramic acid (anhMurNAc) with the simultaneous cleavage of the 1,6-anhydro ring, generating MurNAc-6-P. Is required for the utilization of anhMurNAc either imported from the medium or derived from its own cell wall murein, and thus plays a role in cell wall recycling. This is Anhydro-N-acetylmuramic acid kinase from Synechococcus elongatus (strain ATCC 33912 / PCC 7942 / FACHB-805) (Anacystis nidulans R2).